Here is a 310-residue protein sequence, read N- to C-terminus: Fucose-specific lectin (310 aa).

Tandem repeats lie at residues 1-53 (MSTP…KNVI), 54-103 (AKAK…AGAK), 104-151 (FTVA…EGTN), 152-209 (LGVA…FDKA), 210-256 (PPRC…DKRT), and 257-310 (ITPV…PPAE). The interval 1–310 (MSTPGAQEVL…LGRRALPPAE (310 aa)) is 6 X approximate tandem repeats. The beta-L-fucose site is built by Arg-25, Glu-37, Trp-44, Arg-73, Glu-85, Trp-94, Arg-126, Glu-138, Trp-146, Arg-177, Gln-189, Trp-198, Arg-230, Gln-242, Arg-277, and Glu-291.

It belongs to the fungal fucose-specific lectin family.

Its function is as follows. Lectin that specifically binds to L-fucose and weakly reacts with mannose and N-acetyl-neuraminic acid. Has strongest preference for the alpha-1,6-fucosylated chain (core fucose) on glycoproteins among alpha-1,2-, alpha-1,3-, alpha-1,4-, and alpha-1,6-fucosylated chains. Binds to fucose residues of IgE in mice and human, causing antigen-independent IgE-mediated mast cell activation and anaphylactoid reactions in mice and is possibly implicated in allergic response to Aspergillus oryzae in humans. Induces secretion of pro-inflammatory cytokines IL6 and IL8 implicated in ocular diseases such as mycotic keratitis, probably through its interaction with host toll-like receptors TLR2 and TLR4, followed by up-regulation of pro-inflammatory cytokines. This Aspergillus oryzae (Yellow koji mold) protein is Fucose-specific lectin.